The following is a 460-amino-acid chain: tRNA modification GTPase MnmE (460 aa).

The (6S)-5-formyl-5,6,7,8-tetrahydrofolate site is built by Arg-29, Glu-91, and Arg-131. Residues 226-383 (GLRVALVGRP…LVQAVLERCG (158 aa)) enclose the TrmE-type G domain. A K(+)-binding site is contributed by Asn-236. GTP is bound by residues 236 to 241 (NVGKSS), 255 to 261 (TDLPGTT), and 280 to 283 (DTAG). Position 240 (Ser-240) interacts with Mg(2+). Positions 255, 257, and 260 each coordinate K(+). Residue Thr-261 participates in Mg(2+) binding. (6S)-5-formyl-5,6,7,8-tetrahydrofolate is bound at residue Lys-460.

It belongs to the TRAFAC class TrmE-Era-EngA-EngB-Septin-like GTPase superfamily. TrmE GTPase family. As to quaternary structure, homodimer. Heterotetramer of two MnmE and two MnmG subunits. It depends on K(+) as a cofactor.

It is found in the cytoplasm. Its function is as follows. Exhibits a very high intrinsic GTPase hydrolysis rate. Involved in the addition of a carboxymethylaminomethyl (cmnm) group at the wobble position (U34) of certain tRNAs, forming tRNA-cmnm(5)s(2)U34. The chain is tRNA modification GTPase MnmE from Synechococcus sp. (strain WH7803).